The following is a 304-amino-acid chain: C-type lectin domain family 10 member A (304 aa).

Over 1 to 35 (MIYENLQNSRIEEKTQEPGKAPSQSFLWRILSWTH) the chain is Cytoplasmic. The helical; Signal-anchor for type II membrane protein transmembrane segment at 36–56 (LLLFSLGLSLLLLVVVSVIGS) threads the bilayer. The Extracellular segment spans residues 57 to 304 (QNSQLRRDLG…ICEMKLAKES (248 aa)). Asn-74 and Asn-166 each carry an N-linked (GlcNAc...) asparagine glycan. One can recognise a C-type lectin domain in the interval 172–298 (CCPLHWTEHE…QRTFRWICEM (127 aa)). Disulfide bonds link Cys-173–Cys-184, Cys-201–Cys-296, and Cys-274–Cys-288.

In terms of assembly, homooligomer. Interacts with SIGLEC1, which may act as a counter-receptor for CLEC10A in lymph node. In terms of tissue distribution, detected in lymph node in the subcapsular sinus, interfollicular regions, T and B-cell boundary and in the areas surrounding high endothelial venules (at protein level). Expressed on the surface of activated macrophages. Expressed in heart, lung, testis, skeletal muscle, spleen, brain, kidney and thymus. Expressed in P388, RAW 264.7 and M1 cell lines.

The protein localises to the membrane. In terms of biological role, recognizes terminal galactose and N-acetylgalactosamine units. May participate in the interaction between tumoricidal macrophages and tumor cells. Plays a role in the recruitment of inflammatory monocytes to adipose tissue in diet-induced obesity. The chain is C-type lectin domain family 10 member A (Clec10a) from Mus musculus (Mouse).